The chain runs to 114 residues: U17-barytoxin-Tl1a (114 aa).

Residues 1–20 form the signal peptide; it reads MKTIIVFLSLLVLATKFGDA. Residues 21 to 74 constitute a propeptide that is removed on maturation; the sequence is NEGVNQEQMKEVIQNEFREDFLNEMAPMSLLQQLEAIESTLLEKEADRNSRQKR. 3 cysteine pairs are disulfide-bonded: Cys-75–Cys-88, Cys-82–Cys-93, and Cys-87–Cys-108.

This sequence belongs to the neurotoxin 14 (magi-1) family. 03 (ICK-30-40) subfamily. As to expression, expressed by the venom gland.

The protein resides in the secreted. Ion channel inhibitor. This chain is U17-barytoxin-Tl1a, found in Trittame loki (Brush-footed trapdoor spider).